The primary structure comprises 253 residues: Imidazole glycerol phosphate synthase subunit HisF (253 aa).

Active-site residues include D11 and D130.

Belongs to the HisA/HisF family. Heterodimer of HisH and HisF.

It is found in the cytoplasm. It catalyses the reaction 5-[(5-phospho-1-deoxy-D-ribulos-1-ylimino)methylamino]-1-(5-phospho-beta-D-ribosyl)imidazole-4-carboxamide + L-glutamine = D-erythro-1-(imidazol-4-yl)glycerol 3-phosphate + 5-amino-1-(5-phospho-beta-D-ribosyl)imidazole-4-carboxamide + L-glutamate + H(+). The protein operates within amino-acid biosynthesis; L-histidine biosynthesis; L-histidine from 5-phospho-alpha-D-ribose 1-diphosphate: step 5/9. IGPS catalyzes the conversion of PRFAR and glutamine to IGP, AICAR and glutamate. The HisF subunit catalyzes the cyclization activity that produces IGP and AICAR from PRFAR using the ammonia provided by the HisH subunit. This Gluconobacter oxydans (strain 621H) (Gluconobacter suboxydans) protein is Imidazole glycerol phosphate synthase subunit HisF.